A 220-amino-acid chain; its full sequence is Probable septum site-determining protein MinC (220 aa).

This sequence belongs to the MinC family. As to quaternary structure, interacts with MinD and FtsZ.

Cell division inhibitor that blocks the formation of polar Z ring septums. Rapidly oscillates between the poles of the cell to destabilize FtsZ filaments that have formed before they mature into polar Z rings. Prevents FtsZ polymerization. This Vibrio campbellii (strain ATCC BAA-1116) protein is Probable septum site-determining protein MinC.